The following is a 322-amino-acid chain: Nitrilase (322 aa).

The CN hydrolase domain occupies V5 to L283. E45 serves as the catalytic Proton acceptor. The active site involves K127. C162 acts as the Nucleophile in catalysis.

This sequence belongs to the carbon-nitrogen hydrolase superfamily. Nitrilase family.

It carries out the reaction a nitrile + 2 H2O = a carboxylate + NH4(+). Nitrilase that hydrolyzes preferentially 4-cyanopyridine. This chain is Nitrilase, found in Talaromyces marneffei (strain ATCC 18224 / CBS 334.59 / QM 7333) (Penicillium marneffei).